Consider the following 618-residue polypeptide: Structural protein ORF618 (618 aa).

Residues 570–598 (ILEAKRQIEDRAKGLSKNLDNTVTEIMNA) are a coiled coil.

Its subcellular location is the virion. In Acidianus two-tailed virus (ATV), this protein is Structural protein ORF618.